A 230-amino-acid polypeptide reads, in one-letter code: 2,3-bisphosphoglycerate-dependent phosphoglycerate mutase 2 (230 aa).

Substrate-binding positions include 8-15 (RHGQSEWN), 21-22 (TG), Arg-60, 87-90 (ERHY), Lys-98, 114-115 (RR), and 183-184 (GN). His-9 (tele-phosphohistidine intermediate) is an active-site residue. Glu-87 functions as the Proton donor/acceptor in the catalytic mechanism.

The protein belongs to the phosphoglycerate mutase family. BPG-dependent PGAM subfamily.

The enzyme catalyses (2R)-2-phosphoglycerate = (2R)-3-phosphoglycerate. It participates in carbohydrate degradation; glycolysis; pyruvate from D-glyceraldehyde 3-phosphate: step 3/5. Functionally, catalyzes the interconversion of 2-phosphoglycerate and 3-phosphoglycerate. This chain is 2,3-bisphosphoglycerate-dependent phosphoglycerate mutase 2, found in Lactiplantibacillus plantarum (strain ATCC BAA-793 / NCIMB 8826 / WCFS1) (Lactobacillus plantarum).